Here is a 93-residue protein sequence, read N- to C-terminus: MIVIVAYDISDEDRRGRLRRYLRRLGLARVNRSVYAGPGTATTAELVAERAKEIVEEGDSVFVIVVREDEYQRAHVFDGRDYYIVSERKYEVY.

Asp8 is a binding site for Mg(2+).

This sequence belongs to the CRISPR-associated endoribonuclease Cas2 protein family. As to quaternary structure, homodimer, forms a heterotetramer with a Cas1 homodimer. It depends on Mg(2+) as a cofactor.

In terms of biological role, CRISPR (clustered regularly interspaced short palindromic repeat), is an adaptive immune system that provides protection against mobile genetic elements (viruses, transposable elements and conjugative plasmids). CRISPR clusters contain sequences complementary to antecedent mobile elements and target invading nucleic acids. CRISPR clusters are transcribed and processed into CRISPR RNA (crRNA). Functions as a ssRNA-specific endoribonuclease. Involved in the integration of spacer DNA into the CRISPR cassette. The chain is CRISPR-associated endoribonuclease Cas2 from Thermofilum pendens (strain DSM 2475 / Hrk 5).